We begin with the raw amino-acid sequence, 224 residues long: Elongation factor Ts (224 aa).

Positions 81–84 (TDFV) are involved in Mg(2+) ion dislocation from EF-Tu.

It belongs to the EF-Ts family.

Its subcellular location is the cytoplasm. In terms of biological role, associates with the EF-Tu.GDP complex and induces the exchange of GDP to GTP. It remains bound to the aminoacyl-tRNA.EF-Tu.GTP complex up to the GTP hydrolysis stage on the ribosome. This Finegoldia magna (strain ATCC 29328 / DSM 20472 / WAL 2508) (Peptostreptococcus magnus) protein is Elongation factor Ts.